The primary structure comprises 125 residues: Holo-[acyl-carrier-protein] synthase (125 aa).

2 residues coordinate Mg(2+): D8 and E57.

The protein belongs to the P-Pant transferase superfamily. AcpS family. Mg(2+) serves as cofactor.

Its subcellular location is the cytoplasm. It carries out the reaction apo-[ACP] + CoA = holo-[ACP] + adenosine 3',5'-bisphosphate + H(+). Transfers the 4'-phosphopantetheine moiety from coenzyme A to a Ser of acyl-carrier-protein. This chain is Holo-[acyl-carrier-protein] synthase, found in Neisseria gonorrhoeae (strain ATCC 700825 / FA 1090).